We begin with the raw amino-acid sequence, 323 residues long: Methionyl-tRNA formyltransferase (323 aa).

S115–P118 serves as a coordination point for (6S)-5,6,7,8-tetrahydrofolate.

It belongs to the Fmt family.

It carries out the reaction L-methionyl-tRNA(fMet) + (6R)-10-formyltetrahydrofolate = N-formyl-L-methionyl-tRNA(fMet) + (6S)-5,6,7,8-tetrahydrofolate + H(+). Attaches a formyl group to the free amino group of methionyl-tRNA(fMet). The formyl group appears to play a dual role in the initiator identity of N-formylmethionyl-tRNA by promoting its recognition by IF2 and preventing the misappropriation of this tRNA by the elongation apparatus. In Lactococcus lactis subsp. cremoris (strain SK11), this protein is Methionyl-tRNA formyltransferase.